A 286-amino-acid polypeptide reads, in one-letter code: P2R1A-PPP2R2A-interacting phosphatase regulator 1 (286 aa).

Positions 1-46 (MAQEKMELDLELPAGTGASPAEGGGPGSGGLRRSNSAPLIHGLSDS) are disordered. Ser-34 bears the Phosphoserine mark. Residue Ser-36 is modified to Phosphoserine; by CHEK1. Residues Ser-44, Ser-47, Ser-61, and Ser-75 each carry the phosphoserine modification. Residue Lys-88 forms a Glycyl lysine isopeptide (Lys-Gly) (interchain with G-Cter in SUMO1) linkage. Phosphoserine is present on residues Ser-142 and Ser-146. Residue Thr-148 is modified to Phosphothreonine. Positions 166 to 187 (SNGLPPSPIPSPTTRFTTRRSQ) are disordered. Residues 177 to 187 (PTTRFTTRRSQ) are compositionally biased toward low complexity. Ser-186 and Ser-188 each carry phosphoserine. Positions 238–286 (VSSDTLDGNSSSAGSSCNSPAKVSTTTDSPVSPAQAASPFIPVDELSSK) are disordered. Over residues 245 to 256 (GNSSSAGSSCNS) the composition is skewed to low complexity. The span at 258-269 (AKVSTTTDSPVS) shows a compositional bias: polar residues. 3 positions are modified to phosphoserine: Ser-266, Ser-269, and Ser-275.

Belongs to the FAM122 family. As to quaternary structure, interacts with PPP2CA and PPP2R1A. Interacts (via its N-terminus) with PPP2R2A; the interaction is direct and this interaction inhibits PP2A activity. The CHEK1-mediated Ser-36 phosphorylated form interacts with 14-3-3 proteins. CHEK1-mediated phosphorylation at Ser-36 negatively regulates its ability to inhibit serine/threonine-protein phosphatase 2A (PP2A) activity. Phosphorylation leads to its release from the PP2A complex and its sequestration by 14-3-3 proteins in the cytoplasm resulting in its inability to translocate to the nucleus, where it otherwise inhibits PP2A.

It localises to the nucleus. Its subcellular location is the cytoplasm. Its function is as follows. Acts as an inhibitor of serine/threonine-protein phosphatase 2A (PP2A) activity. Inhibits PP2A activity by blocking the substrate binding site on PPP2R2A and the active site of PPP2CA. Potentiates ubiquitin-mediated proteasomal degradation of serine/threonine-protein phosphatase 2A catalytic subunit alpha (PPP2CA). Inhibits PP2A-mediated dephosphorylation of WEE1, promoting ubiquitin-mediated proteolysis of WEE1, thereby releasing G2/M checkpoint. The sequence is that of P2R1A-PPP2R2A-interacting phosphatase regulator 1 from Rattus norvegicus (Rat).